The chain runs to 188 residues: Adenine phosphoribosyltransferase (188 aa).

This sequence belongs to the purine/pyrimidine phosphoribosyltransferase family. As to quaternary structure, homodimer.

It localises to the cytoplasm. The catalysed reaction is AMP + diphosphate = 5-phospho-alpha-D-ribose 1-diphosphate + adenine. The protein operates within purine metabolism; AMP biosynthesis via salvage pathway; AMP from adenine: step 1/1. Functionally, catalyzes a salvage reaction resulting in the formation of AMP, that is energically less costly than de novo synthesis. The chain is Adenine phosphoribosyltransferase from Burkholderia ambifaria (strain MC40-6).